Here is a 639-residue protein sequence, read N- to C-terminus: Chaperone protein DnaK (639 aa).

Thr195 is subject to Phosphothreonine; by autocatalysis. Low complexity predominate over residues 601 to 618 (NAAAGAAPAGEPAPGEPQ). A disordered region spans residues 601 to 639 (NAAAGAAPAGEPAPGEPQAEQKKDDGVIDAEYVDVDEKK). Residues 627-639 (VIDAEYVDVDEKK) are compositionally biased toward acidic residues.

This sequence belongs to the heat shock protein 70 family.

Its function is as follows. Acts as a chaperone. This Acidobacterium capsulatum (strain ATCC 51196 / DSM 11244 / BCRC 80197 / JCM 7670 / NBRC 15755 / NCIMB 13165 / 161) protein is Chaperone protein DnaK.